Here is a 184-residue protein sequence, read N- to C-terminus: Mediator of RNA polymerase II transcription subunit 30 (184 aa).

The stretch at 136–179 (SQLRFASEEKREILEVNKKLKQKNQQLKQIMDQLRNLIWDINSM) forms a coiled coil.

Belongs to the Mediator complex subunit 30 family. In terms of assembly, component of the Mediator complex.

It localises to the nucleus. Functionally, component of the Mediator complex, a coactivator involved in the regulated transcription of nearly all RNA polymerase II-dependent genes. Mediator functions as a bridge to convey information from gene-specific regulatory proteins to the basal RNA polymerase II transcription machinery. Mediator is recruited to promoters by direct interactions with regulatory proteins and serves as a scaffold for the assembly of a functional preinitiation complex with RNA polymerase II and the general transcription factors. The sequence is that of Mediator of RNA polymerase II transcription subunit 30 (med30) from Xenopus laevis (African clawed frog).